The chain runs to 257 residues: Lysine-rich coiled-coil protein 1 (257 aa).

Positions 145-257 are disordered; it reads NTSAHQASYK…MLWDQSILGF (113 aa). The span at 152 to 162 shows a compositional bias: basic residues; that stretch reads SYKHIHQKRKR. 4 stretches are compositionally biased toward basic and acidic residues: residues 163–176, 183–193, 200–212, and 219–228; these read HTEE…EERP, ACEEIDLDKYK, TEAE…TEKL, and RSRDVASKKE. Residues 210-248 adopt a coiled-coil conformation; it reads EKLKNRKEKRSRDVASKKEERKRRKEKKEQGQERTEEEM.

This Bos taurus (Bovine) protein is Lysine-rich coiled-coil protein 1 (KRCC1).